The following is a 335-amino-acid chain: DNA primase small subunit PriS (335 aa).

Catalysis depends on residues Asp-96, Asp-98, and Asp-243.

It belongs to the eukaryotic-type primase small subunit family. Heterodimer of a small subunit (PriS) and a large subunit (PriL). It depends on Mg(2+) as a cofactor. Requires Mn(2+) as cofactor.

Its function is as follows. Catalytic subunit of DNA primase, an RNA polymerase that catalyzes the synthesis of short RNA molecules used as primers for DNA polymerase during DNA replication. The small subunit contains the primase catalytic core and has DNA synthesis activity on its own. Binding to the large subunit stabilizes and modulates the activity, increasing the rate of DNA synthesis while decreasing the length of the DNA fragments, and conferring RNA synthesis capability. The DNA polymerase activity may enable DNA primase to also catalyze primer extension after primer synthesis. May also play a role in DNA repair. In Archaeoglobus fulgidus (strain ATCC 49558 / DSM 4304 / JCM 9628 / NBRC 100126 / VC-16), this protein is DNA primase small subunit PriS.